Reading from the N-terminus, the 1142-residue chain is Ribonucleoside-diphosphate reductase large subunit (1142 aa).

Positions 1-33 (MANRPAASALAGARSPSERQEPREPEVAPPGGD) are disordered. The span at 16-26 (PSERQEPREPE) shows a compositional bias: basic and acidic residues. An RIP homotypic interaction motif (RHIM) motif is present at residues 55-75 (AYRISDSSFVQCGSNCSMIID). Positions 118 to 322 (SGPSATTSVG…TDPGYPVPLE (205 aa)) are disordered. Positions 119–132 (GPSATTSVGTQTSG) are enriched in polar residues. Residues 141–159 (TPEPQGPQAVPPPPPPPFP) show a composition bias toward pro residues. Over residues 164–179 (CCARRDARGGAEKDVG) the composition is skewed to basic and acidic residues. A compositionally biased stretch (acidic residues) spans 192–205 (SETEDSDSSDEDTG). The segment covering 277–303 (GSATDPRASADSDSAAHAAAPQADVAP) has biased composition (low complexity). The alpha-crystallin domain stretch occupies residues 294–400 (AAAPQADVAP…CLDLPPVPPN (107 aa)). Substrate is bound by residues threonine 571, 586-587 (SC), glycine 617, 796-800 (NLCTE), and 973-977 (PTAAS). A disulfide bridge connects residues cysteine 587 and cysteine 813. Asparagine 796 acts as the Proton acceptor in catalysis. Cysteine 798 serves as the catalytic Cysteine radical intermediate. Glutamate 800 (proton acceptor) is an active-site residue.

It belongs to the ribonucleoside diphosphate reductase large chain family. In terms of assembly, heterotetramer composed of a homodimer of the large subunit (R1) and a homodimer of the small subunit (R2). Larger multisubunit protein complex are also active, composed of (R1)n(R2)n. May self-assemble (via RIP homotypic interaction motif/RHIM) into homomeric fibrillar amyloid structures. Interacts (via RHIM) with human RIPK1 (via RHIM). Interacts (via RHIM) with human RIPK3 (via RHIM). May interact (via RHIM) with human ZBP1 (via RHIM). Interacts (via C-terminus) with host CASP8.

It localises to the host cell membrane. The protein localises to the host endosome membrane. It catalyses the reaction a 2'-deoxyribonucleoside 5'-diphosphate + [thioredoxin]-disulfide + H2O = a ribonucleoside 5'-diphosphate + [thioredoxin]-dithiol. Functionally, ribonucleoside-diphosphate reductase holoenzyme that provides the precursors necessary for viral DNA synthesis. Allows virus growth in non-dividing cells, as well as reactivation from latency in infected hosts. Catalyzes the biosynthesis of deoxyribonucleotides from the corresponding ribonucleotides. The N-terminal region confers antiapoptotic activity in differentiated cells such as neurons and is important for viral reactivation to increase neural survivability. Prevents host necroptosis by targeting host RIPK1 and RIPK3, thereby hampering the formation of necroptotic RIPK1-RIPK3 complexes. May form hetero-amyloid structures with host proteins RIPK3 or ZBP1, thereby preventing RIPK3- and ZBP1-mediated necroptosis. In addition, inhibits extrinsic apoptosis by targeting host CASP8. This chain is Ribonucleoside-diphosphate reductase large subunit, found in Homo sapiens (Human).